The following is a 452-amino-acid chain: GTPase Der (452 aa).

EngA-type G domains are found at residues 9 to 170 (KIIA…PEED) and 185 to 362 (LQIV…KTWN). Residues 15–22 (GRPNVGKS), 62–66 (DTPGF), 124–127 (NKCE), 191–198 (GRPNAGKS), 238–242 (DTAGL), and 303–306 (NKWD) contribute to the GTP site. The 86-residue stretch at 363-448 (KKITTSKLNE…PIRFNYIKTK (86 aa)) folds into the KH-like domain.

It belongs to the TRAFAC class TrmE-Era-EngA-EngB-Septin-like GTPase superfamily. EngA (Der) GTPase family. In terms of assembly, associates with the 50S ribosomal subunit.

In terms of biological role, GTPase that plays an essential role in the late steps of ribosome biogenesis. The sequence is that of GTPase Der from Rickettsia bellii (strain OSU 85-389).